The chain runs to 416 residues: Phakinin (416 aa).

Residues 1-48 (MSERRVAMDLPSGSNASMPLQRHRVSSLRGTRSPSSLDSPPASRTSAV) form a disordered region. N-acetylserine is present on S2. The interval 2 to 115 (SERRVAMDLP…HATAEDLGGC (114 aa)) is head. S27, S33, S36, and S91 each carry phosphoserine. Polar residues predominate over residues 28–48 (LRGTRSPSSLDSPPASRTSAV). Positions 105–416 (NHATAEDLGG…HALLDREESN (312 aa)) constitute an IF rod domain. 2 coiled-coil regions span residues 199–240 (FRKA…SLSR) and 314–391 (LAAA…ERAH). The tract at residues 397-416 (GQLQKDVASYHALLDREESN) is tail.

The protein belongs to the intermediate filament family. Part of a complex required for lens intermediate filament formation composed of BFSP1, BFSP2, and CRYAA. Found in a complex composed of PPL (via C-terminal linker domain), BFSP1 and BFSP2 in the retinal lens. Within the complex interacts with PPL (via C-terminal linker domain) and with BFSP1. Identified in a complex that contains VIM, EZR, AHNAK, BFSP1, BFSP2, ANK2, PLEC, PRX and spectrin. Interacts with LGSN. Interacts with VIM. In terms of tissue distribution, expressed in the deep and shallow cortices of the retina lens (at protein level).

It localises to the cell membrane. The protein resides in the cytoplasm. The protein localises to the cytoskeleton. It is found in the cell cortex. Required for the correct formation of lens intermediate filaments as part of a complex composed of BFSP1, BFSP2 and CRYAA. Plays a role in maintenance of retinal lens optical clarity. The polypeptide is Phakinin (Rattus norvegicus (Rat)).